Consider the following 347-residue polypeptide: Protein-glutamate methylesterase/protein-glutamine glutaminase (347 aa).

Residues 6 to 123 (RVLVVDDSPT…HRPFGDLAEK (118 aa)) enclose the Response regulatory domain. Asp-57 is modified (4-aspartylphosphate). A CheB-type methylesterase domain is found at 150 to 342 (FRVGRKIVAI…EEILKLTAAR (193 aa)). Residues Ser-162, His-188, and Asp-284 contribute to the active site.

The protein belongs to the CheB family. Phosphorylated by CheA. Phosphorylation of the N-terminal regulatory domain activates the methylesterase activity.

Its subcellular location is the cytoplasm. The catalysed reaction is [protein]-L-glutamate 5-O-methyl ester + H2O = L-glutamyl-[protein] + methanol + H(+). It catalyses the reaction L-glutaminyl-[protein] + H2O = L-glutamyl-[protein] + NH4(+). Functionally, involved in chemotaxis. Part of a chemotaxis signal transduction system that modulates chemotaxis in response to various stimuli. Catalyzes the demethylation of specific methylglutamate residues introduced into the chemoreceptors (methyl-accepting chemotaxis proteins or MCP) by CheR. Also mediates the irreversible deamidation of specific glutamine residues to glutamic acid. The protein is Protein-glutamate methylesterase/protein-glutamine glutaminase of Rhizobium etli (strain ATCC 51251 / DSM 11541 / JCM 21823 / NBRC 15573 / CFN 42).